We begin with the raw amino-acid sequence, 212 residues long: Uridine kinase (212 aa).

Residue 13–20 coordinates ATP; sequence GGSGSGKT.

Belongs to the uridine kinase family.

The protein localises to the cytoplasm. It carries out the reaction uridine + ATP = UMP + ADP + H(+). It catalyses the reaction cytidine + ATP = CMP + ADP + H(+). Its pathway is pyrimidine metabolism; CTP biosynthesis via salvage pathway; CTP from cytidine: step 1/3. The protein operates within pyrimidine metabolism; UMP biosynthesis via salvage pathway; UMP from uridine: step 1/1. The protein is Uridine kinase of Bacillus thuringiensis (strain Al Hakam).